Here is a 455-residue protein sequence, read N- to C-terminus: Bifunctional protein GlmU (455 aa).

A pyrophosphorylase region spans residues 1 to 225; that stretch reads MNIVILAAGL…EWETLGVNSK (225 aa). Residues 6 to 9, K20, Q71, 76 to 77, 98 to 100, G135, E150, N165, and N223 contribute to the UDP-N-acetyl-alpha-D-glucosamine site; these read LAAG, GT, and YGD. Mg(2+) is bound at residue D100. Residue N223 coordinates Mg(2+). Residues 226–246 form a linker region; sequence VQLAELERIHQRNLAQQLLED. Residues 247 to 455 form an N-acetyltransferase region; the sequence is GVTLIDPARI…QRPVKQKKDA (209 aa). The UDP-N-acetyl-alpha-D-glucosamine site is built by R329 and K347. The active-site Proton acceptor is H359. Residues Y362 and N373 each coordinate UDP-N-acetyl-alpha-D-glucosamine. Residues A376, 382–383, S401, A419, and R436 contribute to the acetyl-CoA site; that span reads NY.

In the N-terminal section; belongs to the N-acetylglucosamine-1-phosphate uridyltransferase family. This sequence in the C-terminal section; belongs to the transferase hexapeptide repeat family. Homotrimer. Requires Mg(2+) as cofactor.

The protein resides in the cytoplasm. The enzyme catalyses alpha-D-glucosamine 1-phosphate + acetyl-CoA = N-acetyl-alpha-D-glucosamine 1-phosphate + CoA + H(+). It carries out the reaction N-acetyl-alpha-D-glucosamine 1-phosphate + UTP + H(+) = UDP-N-acetyl-alpha-D-glucosamine + diphosphate. It participates in nucleotide-sugar biosynthesis; UDP-N-acetyl-alpha-D-glucosamine biosynthesis; N-acetyl-alpha-D-glucosamine 1-phosphate from alpha-D-glucosamine 6-phosphate (route II): step 2/2. Its pathway is nucleotide-sugar biosynthesis; UDP-N-acetyl-alpha-D-glucosamine biosynthesis; UDP-N-acetyl-alpha-D-glucosamine from N-acetyl-alpha-D-glucosamine 1-phosphate: step 1/1. The protein operates within bacterial outer membrane biogenesis; LPS lipid A biosynthesis. Functionally, catalyzes the last two sequential reactions in the de novo biosynthetic pathway for UDP-N-acetylglucosamine (UDP-GlcNAc). The C-terminal domain catalyzes the transfer of acetyl group from acetyl coenzyme A to glucosamine-1-phosphate (GlcN-1-P) to produce N-acetylglucosamine-1-phosphate (GlcNAc-1-P), which is converted into UDP-GlcNAc by the transfer of uridine 5-monophosphate (from uridine 5-triphosphate), a reaction catalyzed by the N-terminal domain. The sequence is that of Bifunctional protein GlmU from Ralstonia nicotianae (strain ATCC BAA-1114 / GMI1000) (Ralstonia solanacearum).